The chain runs to 492 residues: Cytochrome P450 2A1 (492 aa).

At S130 the chain carries Phosphoserine. Residue C437 participates in heme binding.

This sequence belongs to the cytochrome P450 family. The cofactor is heme. In terms of tissue distribution, liver and testis.

It is found in the endoplasmic reticulum membrane. The protein resides in the microsome membrane. It catalyses the reaction an organic molecule + reduced [NADPH--hemoprotein reductase] + O2 = an alcohol + oxidized [NADPH--hemoprotein reductase] + H2O + H(+). Highly active in the 7-alpha-hydroxylation of testosterone, progesterone and androstenedione. In Rattus norvegicus (Rat), this protein is Cytochrome P450 2A1 (Cyp2a1).